The primary structure comprises 494 residues: Subtilisin-like serine protease Pen ch 18.0101 (494 aa).

An N-terminal signal peptide occupies residues 1-16 (MKGFLSLTLLPLLVAA). The propeptide at 17–136 (SPVAVNSIHN…IEKDSEVRTM (120 aa)) is removed in mature form. Residues 43–136 (SYIVVFKKHV…IEKDSEVRTM (94 aa)) enclose the Inhibitor I9 domain. The 303-residue stretch at 146–448 (PWGLARISHR…GGSANYTKIL (303 aa)) folds into the Peptidase S8 domain. 2 igE-binding regions span residues 180–198 (VIDTGANVKHVDFEGRANW) and 209–231 (EDGNGHGTHCSGTIAGKKFGVAK). Residues Asp182 and His214 each act as charge relay system in the active site. N-linked (GlcNAc...) asparagine glycans are attached at residues Asn244 and Asn280. Ser376 acts as the Charge relay system in catalysis. N-linked (GlcNAc...) asparagine glycosylation is present at Asn443. Residues 454 to 494 (KAHNAETTVEDRIGIIIDSAEKAFHKELGAIYSEIKDAVSV) constitute a propeptide, removed in mature form.

The protein belongs to the peptidase S8 family.

In terms of biological role, serine protease. This chain is Subtilisin-like serine protease Pen ch 18.0101, found in Penicillium rubens.